Reading from the N-terminus, the 165-residue chain is MPHLDQKLPMRWRIPSRLWAWVGILALLWLGLASPVAARIDPYVNQYLRVSGPVELPLDAAGHTLTFTPEQLTDGKNRFQSACLNCHVGGATLPAPNISLSLKDLRGATPPRDTLQALMEYQRDPRSYDGSDSSYGCRPVPPSWMDDEAVNYPAPTAKRYGAGFQ.

The N-terminal stretch at 1-38 (MPHLDQKLPMRWRIPSRLWAWVGILALLWLGLASPVAA) is a signal peptide. Heme c-binding residues include cysteine 83, cysteine 86, histidine 87, and cysteine 137.

Belongs to the cytochrome c family. PsbV subfamily. Heme c is required as a cofactor.

It localises to the cellular thylakoid membrane. Possible low-potential cytochrome c. In Synechococcus sp. (strain JA-2-3B'a(2-13)) (Cyanobacteria bacterium Yellowstone B-Prime), this protein is Cytochrome c-550-like protein (psbV2).